The chain runs to 69 residues: MVFAPGEKSGKELEEVKLQNTSKQIVQNAILQAMRQVSQESLRREGRPGDSRAWGQLGGCELTKKHEKK.

Positions Gln39 to Lys69 are disordered. Residues Ser41 to Asp50 are compositionally biased toward basic and acidic residues.

Binds cAMP-dependent protein kinase (PKA). Interacts specifically with RII-regulatory subunits of PKA (PRKAR2A and PRKAR2B). Preferentially expressed in the neural tissues.

In terms of biological role, protein kinase A (PKA)-binding protein. Binds to type II regulatory subunits of protein kinase A (PKA) and may block the A-kinase anchoring protein (AKAP)-mediated subcellular localization of PKA. This Mus musculus (Mouse) protein is A-kinase anchor protein inhibitor 1.